A 1015-amino-acid polypeptide reads, in one-letter code: Fibronectin-binding protein A (1015 aa).

A signal peptide spans 1 to 36; sequence MKNNLRYGIRKHKLGAASVFLGTMIVVGMGQDKEAA. The YSIRK-G/S signaling motif motif lies at 7-18; it reads YGIRKHKLGAAS. The interval 37–512 is ligand-binding A region; it reads ASEQKTTTVE…SNKADGNGKN (476 aa). Over residues 75–92 the composition is skewed to polar residues; that stretch reads SYSATATEQPSNATQVTT. Residues 75–199 are disordered; it reads SYSATATEQP…KVETGTDVTS (125 aa). Positions 112-126 are enriched in basic and acidic residues; it reads TVKEEVVKEEAKPQV. The span at 129 to 139 shows a compositional bias: polar residues; that stretch reads TTQSQDNSGDQ. A compositionally biased stretch (basic and acidic residues) spans 179–193; sequence DVVEAKEASDEKVET. Residues 194-512 are fibrinogen/elastin/tropoelastin-binding; the sequence is GTDVTSKVTV…SNKADGNGKN (319 aa). A fibronectin-binding region spans residues 513–873; it reads GQIIQNNDFE…EGQQTIEEDT (361 aa). The stretch at 546-575 is one B-1 repeat; the sequence is ENQDNTPLDIDYHTAIDGEGGYVDGYIETI. Positions 546-605 are 2 X approximate tandem repeats; that stretch reads ENQDNTPLDIDYHTAIDGEGGYVDGYIETIEETDSSAIDIDYHTAVDSEAGHVGGYTESS. Residues 576-605 form a B-2 repeat; the sequence is EETDSSAIDIDYHTAVDSEAGHVGGYTESS. Disordered regions lie at residues 596 to 623, 741 to 815, 828 to 953, and 966 to 992; these read GHVGGYTESSEESNPIDFEESTHENSKH, LGYE…IDFD, EIIE…GKVV, and VAPTKKAQSKKSELPETGGEESTNKGM. The D-1 repeat unit spans residues 746 to 783; sequence GQNSGNQSFEEDTEEDKPKYEQGGNIVDIDFDSVPQIQ. A 4 X approximate tandem repeats region spans residues 746 to 875; the sequence is GQNSGNQSFE…QQTIEEDTTP (130 aa). The segment covering 780 to 791 has biased composition (polar residues); the sequence is PQIQGQNNGNQS. The D-2 repeat unit spans residues 784 to 821; the sequence is GQNNGNQSFEEDTEKDKPKYEQGGNIIDIDFDSVPQIH. The stretch at 822–860 is one D-3 repeat; sequence GFNKHTEIIEEDTNKDKPNYQFGGHNSVDFEEDTLPKVS. A compositionally biased stretch (basic and acidic residues) spans 828 to 839; the sequence is EIIEEDTNKDKP. The D-4; truncated repeat unit spans residues 861-875; the sequence is GQNEGQQTIEEDTTP. A compositionally biased stretch (pro residues) spans 875 to 935; that stretch reads PPTPPTPEVP…PAEPGKPVPP (61 aa). 5 WR repeats span residues 876-889, 890-903, 904-917, 918-931, and 932-945; these read PTPPTPEVPSEPET, PTPPTPEVPAEPGK, and PVPPAKEEPKKPSK. Positions 876-945 are 5 X tandem repeats, Pro-rich (WR); sequence PTPPTPEVPS…AKEEPKKPSK (70 aa). Positions 979–983 match the LPXTG sorting signal motif; the sequence is LPETG. Position 982 is a pentaglycyl murein peptidoglycan amidated threonine (Thr-982). Residues 983–1015 constitute a propeptide, removed by sortase; that stretch reads GGEESTNKGMLFGGLFSILGLALLRRNKKNNKA.

Its subcellular location is the secreted. The protein localises to the cell wall. In terms of biological role, promotes bacterial attachment to multiple substrates, such as fibronectin (Fn), fibrinogen (Fg), elastin peptides and tropoelastin. This confers to S.aureus the ability to invade endothelial cells. Promotes adherence to and aggregation of activated platelets. The polypeptide is Fibronectin-binding protein A (fnbA) (Staphylococcus aureus (strain MSSA476)).